The following is a 236-amino-acid chain: Pyridoxine 5'-phosphate synthase (236 aa).

Asparagine 7 is a binding site for 3-amino-2-oxopropyl phosphate. A 1-deoxy-D-xylulose 5-phosphate-binding site is contributed by 9 to 10 (DH). Arginine 18 contacts 3-amino-2-oxopropyl phosphate. Histidine 43 serves as the catalytic Proton acceptor. 1-deoxy-D-xylulose 5-phosphate contacts are provided by arginine 45 and histidine 50. The Proton acceptor role is filled by glutamate 69. Threonine 99 provides a ligand contact to 1-deoxy-D-xylulose 5-phosphate. The active-site Proton donor is histidine 190. 3-amino-2-oxopropyl phosphate contacts are provided by residues glycine 191 and 212 to 213 (GH).

The protein belongs to the PNP synthase family. As to quaternary structure, homooctamer; tetramer of dimers.

The protein localises to the cytoplasm. The catalysed reaction is 3-amino-2-oxopropyl phosphate + 1-deoxy-D-xylulose 5-phosphate = pyridoxine 5'-phosphate + phosphate + 2 H2O + H(+). It participates in cofactor biosynthesis; pyridoxine 5'-phosphate biosynthesis; pyridoxine 5'-phosphate from D-erythrose 4-phosphate: step 5/5. Functionally, catalyzes the complicated ring closure reaction between the two acyclic compounds 1-deoxy-D-xylulose-5-phosphate (DXP) and 3-amino-2-oxopropyl phosphate (1-amino-acetone-3-phosphate or AAP) to form pyridoxine 5'-phosphate (PNP) and inorganic phosphate. This chain is Pyridoxine 5'-phosphate synthase, found in Desulfosudis oleivorans (strain DSM 6200 / JCM 39069 / Hxd3) (Desulfococcus oleovorans).